The following is a 311-amino-acid chain: NEDD4 family-interacting protein 2 (311 aa).

A disordered region spans residues 1-133; that stretch reads RRSASDAELS…PPYSSITVEA (133 aa). Residues 1 to 206 are Cytoplasmic-facing; that stretch reads RRSASDAELS…VEQLRVGNDG (206 aa). Residues 7–22 show a composition bias toward low complexity; the sequence is AELSAGAEGATGSEAA. Positions 26–37 are enriched in gly residues; that stretch reads DLGGRTRGGGRG. Residues 38–47 show a composition bias toward low complexity; the sequence is SAAAAATTST. The segment covering 48 to 75 has biased composition (basic and acidic residues); the sequence is REAEGAERRGDTPARKPDPEAGRMDHHQ. Positions 92–101 are enriched in polar residues; sequence ESSAVEQPST. Low complexity predominate over residues 102 to 120; the sequence is SSLAAPTVEAAASAPALDP. The tract at residues 123–126 is interaction with NEDD4; it reads PPPY. Residues 123–126 carry the PPxY motif 1 motif; sequence PPPY. Residues Tyr126, Tyr142, Tyr146, and Tyr152 each carry the phosphotyrosine; by SRC modification. 2 consecutive short sequence motifs (PPxY motif) follow at residues 149–152 and 159–161; these read PPPY and PTY. A helical membrane pass occupies residues 207-227; sequence IFMLAFFMAFIFNWLGFCLSF. The Extracellular portion of the chain corresponds to 228–232; it reads CITNT. Residues 233-253 traverse the membrane as a helical segment; the sequence is IAGRYGAICGFGLSLIKWILI. Over 254-262 the chain is Cytoplasmic; that stretch reads VRFSDYFTG. A helical transmembrane segment spans residues 263 to 283; sequence YFNGQYWLWWIFLVLGLLLFF. Residues 284 to 311 are Extracellular-facing; that stretch reads RGFVNYLKVRNMSESMAAAHRTRYFFLL.

Forms heterodimers with NDFIP1. Interacts with HECT domain-containing E3 ubiquitin-protein ligases, including NEDD4. Interacts with NEDD4L. When phosphorylated at Tyr-142, interacts with SRC and LYN SH2 domain. May thus act as a scaffold that recruits SRC to NDFIP1, enhancing NDFIP1 phosphorylation. Interacts with SLC11A2/DMT1. May interact with phosphorylated EGFR. Interacts with KCNH2. Ubiquitinated by NEDD4 and NEDD4L; which does not affect turnover. Also ubiquitinated by ITCH. Post-translationally, undergoes transient tyrosine-phosphorylation following EGF stimulation, most probably catalyzed by SRC. Phosphorylation on Tyr-126, Tyr-146 and Tyr-152 are dependent on the phosphorylation on Tyr-142. Also phosphorylated by LYN and FYN. As to expression, ubiquitously expressed, with highest levels in brain, liver, kidney and testis.

It localises to the endosome membrane. Its subcellular location is the golgi apparatus membrane. It is found in the endosome. The protein resides in the multivesicular body membrane. Functionally, activates HECT domain-containing E3 ubiquitin-protein ligases, including ITCH, NEDD4, NEDD4L, SMURF2, WWP1 and WWP2, and consequently modulates the stability of their targets. As a result, may control many cellular processes. Recruits ITCH, NEDD4 and SMURF2 to endosomal membranes. Negatively regulates KCNH2 potassium channel activity by decreasing its cell-surface expression and interfering with channel maturation through recruitment of NEDD4L to the Golgi apparatus and multivesicular body where it mediates KCNH2 degradation. May modulate EGFR signaling. Together with NDFIP1, limits the cytokine signaling and expansion of effector Th2 T-cells by promoting degradation of JAK1, probably by ITCH- and NEDD4L-mediated ubiquitination. This Mus musculus (Mouse) protein is NEDD4 family-interacting protein 2 (Ndfip2).